A 333-amino-acid chain; its full sequence is MHKHRKPTEADVTPESLFYQRRRILKALGISAAALSLPFSAQADLLAWFKGTDKPKAPPGKPLTFSQPADWKLDLPLTPEDKVTGYNNFYEFGLDKADPAANAGGLKTEGWTIKIDGDVAKPLTLDIDDLLKRFPLEERIYRFRCVEAWSMVIPWVGFELAKLIKFAEPTSNARYVAFQTLYDPEQMPGQKDRFMGGGLDYPYVEGLRMDEAMNPLALLAVGVYGKTLPPQNGAPIRLVTPWKYGFKNIKSIVHIRFTREKPPCTWNLAAPDEYGFYANVNPHVDHPRWSQATERVIGSGGLLNVERQPTLLFNGYAEQVASLYRGLNLRDNF.

The segment at residues 1–43 (MHKHRKPTEADVTPESLFYQRRRILKALGISAAALSLPFSAQA) is a signal peptide (tat-type signal). Mo-molybdopterin-binding positions include N87, 90 to 91 (YE), C145, T180, N232, R237, and 248 to 250 (NIK).

Belongs to the MsrP family. In terms of assembly, heterodimer of a catalytic subunit (MsrP) and a heme-binding subunit (MsrQ). The cofactor is Mo-molybdopterin. Post-translationally, predicted to be exported by the Tat system. The position of the signal peptide cleavage has not been experimentally proven.

It is found in the periplasm. It catalyses the reaction L-methionyl-[protein] + a quinone + H2O = L-methionyl-(S)-S-oxide-[protein] + a quinol. The enzyme catalyses L-methionyl-[protein] + a quinone + H2O = L-methionyl-(R)-S-oxide-[protein] + a quinol. Its function is as follows. Part of the MsrPQ system that repairs oxidized periplasmic proteins containing methionine sulfoxide residues (Met-O), using respiratory chain electrons. Thus protects these proteins from oxidative-stress damage caused by reactive species of oxygen and chlorine generated by the host defense mechanisms. MsrPQ is essential for the maintenance of envelope integrity under bleach stress, rescuing a wide series of structurally unrelated periplasmic proteins from methionine oxidation. The catalytic subunit MsrP is non-stereospecific, being able to reduce both (R-) and (S-) diastereoisomers of methionine sulfoxide. This chain is Protein-methionine-sulfoxide reductase catalytic subunit MsrP, found in Pectobacterium carotovorum subsp. carotovorum (strain PC1).